Consider the following 405-residue polypeptide: Replication factor C large subunit (405 aa).

G47 to T54 contacts ATP.

Belongs to the activator 1 small subunits family. RfcL subfamily. In terms of assembly, heteromultimer composed of small subunits (RfcS) and large subunits (RfcL).

Functionally, part of the RFC clamp loader complex which loads the PCNA sliding clamp onto DNA. This is Replication factor C large subunit from Saccharolobus islandicus (strain L.S.2.15 / Lassen #1) (Sulfolobus islandicus).